We begin with the raw amino-acid sequence, 104 residues long: uncharacterized protein (104 aa).

2 disordered regions span residues 1–20 and 83–104; these read MTET…TTRK and TASA…VAKK. A compositionally biased stretch (low complexity) spans 83–93; the sequence is TASASSSGKKV. Residues 94 to 104 show a composition bias toward basic residues; that stretch reads VASKKKVVAKK.

This is an uncharacterized protein from Dictyostelium discoideum (Social amoeba).